The primary structure comprises 217 residues: Glycerol-3-phosphate acyltransferase (217 aa).

5 helical membrane passes run 1 to 21, 54 to 74, 84 to 104, 126 to 146, and 165 to 185; these read MAWA…SIPT, TAAI…VGGV, AIVP…AAIL, VLLV…LFML, and LLML…LAGI.

It belongs to the PlsY family. As to quaternary structure, probably interacts with PlsX.

It localises to the cell inner membrane. It catalyses the reaction an acyl phosphate + sn-glycerol 3-phosphate = a 1-acyl-sn-glycero-3-phosphate + phosphate. The protein operates within lipid metabolism; phospholipid metabolism. Functionally, catalyzes the transfer of an acyl group from acyl-phosphate (acyl-PO(4)) to glycerol-3-phosphate (G3P) to form lysophosphatidic acid (LPA). This enzyme utilizes acyl-phosphate as fatty acyl donor, but not acyl-CoA or acyl-ACP. This Rippkaea orientalis (strain PCC 8801 / RF-1) (Cyanothece sp. (strain PCC 8801)) protein is Glycerol-3-phosphate acyltransferase.